The primary structure comprises 307 residues: Protein ORANGE, chloroplastic (307 aa).

The transit peptide at 1-55 (MSSLGRILSVSYPPDPYTWRFSQYKLSSSLGRNRRLRWRFTALDPESSSLDSESS) directs the protein to the chloroplast. K58 participates in a covalent cross-link: Glycyl lysine isopeptide (Lys-Gly) (interchain with G-Cter in ubiquitin). 2 consecutive transmembrane segments (helical) span residues 146 to 166 (VYYA…GLLA) and 199 to 219 (IVAS…VVEV). A CR-type-like region spans residues 208–299 (VGVISALMVV…CTGMAMASEH (92 aa)). The CXXCXGXG motif repeat unit spans residues 230–237 (CKYCLGTG). A CXXCXXXG motif repeat occupies 241–248 (CARCSSTG). One copy of the CXXCXGXG motif repeat lies at 274 to 281 (CSNCSGAG). A CXXCXXXG motif repeat occupies 285-292 (CPTCLCTG).

This sequence belongs to the orange-like family. Interacts with the phytoene synthase PSY1 in chloroplast. Binds to the eukaryotic release factor eRF1-2. Interacts with the transcription factor TCP14 in the nucleus to repress chloroplast biogenesis in etiolated seedlings. Associates to the E2 ubiquitin-conjugating enzyme UBC19. Ubiquitination at K-58 by UBC19 is essential for nuclear localization.

The protein resides in the plastid. The protein localises to the chloroplast membrane. It is found in the nucleus. It localises to the cytoplasm. In terms of biological role, involved in chromoplast differentiation. Associated with a cellular process that triggers the differentiation of pro-plastids or other non-colored plastids into chromoplasts for carotenoid accumulation. Is associated with carotenoid accumulation in chromoplasts. Functions as a major regulator of the phytoene synthase PSY1 protein level and activity. Modulates carotenoid biosynthesis by means of post-transcriptional regulation of PSY1. Modulates carotenoid biosynthesis in part by up-regulating a series of endogenous carotenogenic genes. Regulates cell elongation in the petiole in an eRF1-2-dependent manner. Binds to and represses TCP14 transactivation activity, thus preventing early light-induced proteins (ELIPs, e.g. ELIP1 and ELIP2) expression and delaying chloroplast biogenesis (e.g. lower chlorophyll biosynthesis and slower development of thylakoid membranes) in germinating cotyledons and etiolated seedlings; reduced levels upon illumination combined to TCP14 accumulation derepress chloroplast biogenesis during deetiolation. This chain is Protein ORANGE, chloroplastic, found in Arabidopsis thaliana (Mouse-ear cress).